Here is a 303-residue protein sequence, read N- to C-terminus: Deoxyhypusine hydroxylase (303 aa).

2 HEAT-like PBS-type repeats span residues Leu56–Asp82 and Val89–Asp115. Residues His58, His91, and Glu92 each contribute to the Fe cation site. The interval Asp139–Lys158 is disordered. HEAT-like PBS-type repeat units follow at residues His176 to Ile202, Phe207 to Arg233, and Val240 to Asp266. Positions 209, 242, and 243 each coordinate Fe cation.

Belongs to the deoxyhypusine hydroxylase family. Fe(2+) is required as a cofactor.

It carries out the reaction [eIF5A protein]-deoxyhypusine + AH2 + O2 = [eIF5A protein]-hypusine + A + H2O. It participates in protein modification; eIF5A hypusination. Its function is as follows. Catalyzes the hydroxylation of the N(6)-(4-aminobutyl)-L-lysine intermediate produced by deoxyhypusine synthase/DHPS on a critical lysine of the eukaryotic translation initiation factor 5A/eIF-5A. This is the second step of the post-translational modification of that lysine into an unusual amino acid residue named hypusine. Hypusination is unique to mature eIF-5A factor and is essential for its function. In Xenopus laevis (African clawed frog), this protein is Deoxyhypusine hydroxylase (dohh).